The following is a 37-amino-acid chain: Mu-agatoxin-Aa1d (37 aa).

Cystine bridges form between C2/C18, C9/C23, C17/C33, and C25/C31. Position 37 is an asparagine amide (N37).

It belongs to the neurotoxin 07 (Beta/delta-agtx) family. 03 (aga-4) subfamily. Aga sub-subfamily. Expressed by the venom gland.

Its subcellular location is the secreted. Insecticidal neurotoxin that induces an irreversible spastic paralysis when injected into insects. Modifies presynaptic voltage-gated sodium channels (Nav), causing them to open at the normal resting potential of the nerve. This leads to spontaneous release of neurotransmitter and repetitive action potentials in motor neurons. This is Mu-agatoxin-Aa1d from Agelenopsis aperta (North American funnel-web spider).